Here is a 117-residue protein sequence, read N- to C-terminus: Ribosome-binding factor A (117 aa).

This sequence belongs to the RbfA family. Monomer. Binds 30S ribosomal subunits, but not 50S ribosomal subunits or 70S ribosomes.

The protein resides in the cytoplasm. In terms of biological role, one of several proteins that assist in the late maturation steps of the functional core of the 30S ribosomal subunit. Associates with free 30S ribosomal subunits (but not with 30S subunits that are part of 70S ribosomes or polysomes). Required for efficient processing of 16S rRNA. May interact with the 5'-terminal helix region of 16S rRNA. The sequence is that of Ribosome-binding factor A from Bacillus subtilis (strain 168).